Here is a 454-residue protein sequence, read N- to C-terminus: Bifunctional protein GlmU (454 aa).

The tract at residues 1-232 (MTDRTCLSIV…VDNVIGINNR (232 aa)) is pyrophosphorylase. UDP-N-acetyl-alpha-D-glucosamine contacts are provided by residues 11 to 14 (LAAG), K25, Q78, and 83 to 84 (GT). D108 is a Mg(2+) binding site. UDP-N-acetyl-alpha-D-glucosamine is bound by residues G144, E158, N173, and N230. Mg(2+) is bound at residue N230. The linker stretch occupies residues 233–253 (VELAEAEAIWQQRKRREMMLA). An N-acetyltransferase region spans residues 254 to 454 (GVTLIAPETV…AIKAAKTATK (201 aa)). UDP-N-acetyl-alpha-D-glucosamine is bound by residues R319 and K337. Residue H349 is the Proton acceptor of the active site. Positions 352 and 363 each coordinate UDP-N-acetyl-alpha-D-glucosamine. Residues A366, 372–373 (NY), S391, S409, and R426 each bind acetyl-CoA.

In the N-terminal section; belongs to the N-acetylglucosamine-1-phosphate uridyltransferase family. It in the C-terminal section; belongs to the transferase hexapeptide repeat family. In terms of assembly, homotrimer. Requires Mg(2+) as cofactor.

Its subcellular location is the cytoplasm. The catalysed reaction is alpha-D-glucosamine 1-phosphate + acetyl-CoA = N-acetyl-alpha-D-glucosamine 1-phosphate + CoA + H(+). It catalyses the reaction N-acetyl-alpha-D-glucosamine 1-phosphate + UTP + H(+) = UDP-N-acetyl-alpha-D-glucosamine + diphosphate. It functions in the pathway nucleotide-sugar biosynthesis; UDP-N-acetyl-alpha-D-glucosamine biosynthesis; N-acetyl-alpha-D-glucosamine 1-phosphate from alpha-D-glucosamine 6-phosphate (route II): step 2/2. Its pathway is nucleotide-sugar biosynthesis; UDP-N-acetyl-alpha-D-glucosamine biosynthesis; UDP-N-acetyl-alpha-D-glucosamine from N-acetyl-alpha-D-glucosamine 1-phosphate: step 1/1. The protein operates within bacterial outer membrane biogenesis; LPS lipid A biosynthesis. In terms of biological role, catalyzes the last two sequential reactions in the de novo biosynthetic pathway for UDP-N-acetylglucosamine (UDP-GlcNAc). The C-terminal domain catalyzes the transfer of acetyl group from acetyl coenzyme A to glucosamine-1-phosphate (GlcN-1-P) to produce N-acetylglucosamine-1-phosphate (GlcNAc-1-P), which is converted into UDP-GlcNAc by the transfer of uridine 5-monophosphate (from uridine 5-triphosphate), a reaction catalyzed by the N-terminal domain. This Brucella anthropi (strain ATCC 49188 / DSM 6882 / CCUG 24695 / JCM 21032 / LMG 3331 / NBRC 15819 / NCTC 12168 / Alc 37) (Ochrobactrum anthropi) protein is Bifunctional protein GlmU.